The primary structure comprises 118 residues: Small ribosomal subunit protein uS13 (118 aa).

The interval 94-118 is disordered; it reads SLPLRGQRTKTNARTRKGPRKPIKK.

Belongs to the universal ribosomal protein uS13 family. In terms of assembly, part of the 30S ribosomal subunit. Forms a loose heterodimer with protein S19. Forms two bridges to the 50S subunit in the 70S ribosome.

In terms of biological role, located at the top of the head of the 30S subunit, it contacts several helices of the 16S rRNA. In the 70S ribosome it contacts the 23S rRNA (bridge B1a) and protein L5 of the 50S subunit (bridge B1b), connecting the 2 subunits; these bridges are implicated in subunit movement. Contacts the tRNAs in the A and P-sites. This chain is Small ribosomal subunit protein uS13, found in Vibrio cholerae serotype O1 (strain ATCC 39315 / El Tor Inaba N16961).